Consider the following 152-residue polypeptide: Urease accessory protein UreE (152 aa).

It belongs to the UreE family.

The protein resides in the cytoplasm. In terms of biological role, involved in urease metallocenter assembly. Binds nickel. Probably functions as a nickel donor during metallocenter assembly. In Enterobacter sp. (strain 638), this protein is Urease accessory protein UreE.